The chain runs to 232 residues: 5'-methylthioadenosine/S-adenosylhomocysteine nucleosidase (232 aa).

Glutamate 12 (proton acceptor) is an active-site residue. Substrate contacts are provided by residues glycine 78, isoleucine 152, and 173-174 (ME). The active-site Proton donor is aspartate 197.

Belongs to the PNP/UDP phosphorylase family. MtnN subfamily. Homodimer.

The catalysed reaction is S-adenosyl-L-homocysteine + H2O = S-(5-deoxy-D-ribos-5-yl)-L-homocysteine + adenine. It carries out the reaction S-methyl-5'-thioadenosine + H2O = 5-(methylsulfanyl)-D-ribose + adenine. The enzyme catalyses 5'-deoxyadenosine + H2O = 5-deoxy-D-ribose + adenine. It participates in amino-acid biosynthesis; L-methionine biosynthesis via salvage pathway; S-methyl-5-thio-alpha-D-ribose 1-phosphate from S-methyl-5'-thioadenosine (hydrolase route): step 1/2. Catalyzes the irreversible cleavage of the glycosidic bond in both 5'-methylthioadenosine (MTA) and S-adenosylhomocysteine (SAH/AdoHcy) to adenine and the corresponding thioribose, 5'-methylthioribose and S-ribosylhomocysteine, respectively. Also cleaves 5'-deoxyadenosine, a toxic by-product of radical S-adenosylmethionine (SAM) enzymes, into 5-deoxyribose and adenine. Thus, is required for in vivo function of the radical SAM enzymes biotin synthase and lipoic acid synthase, that are inhibited by 5'-deoxyadenosine accumulation. This is 5'-methylthioadenosine/S-adenosylhomocysteine nucleosidase from Escherichia coli O9:H4 (strain HS).